Here is a 237-residue protein sequence, read N- to C-terminus: Leucyl/phenylalanyl-tRNA--protein transferase (237 aa).

Belongs to the L/F-transferase family.

It is found in the cytoplasm. It catalyses the reaction N-terminal L-lysyl-[protein] + L-leucyl-tRNA(Leu) = N-terminal L-leucyl-L-lysyl-[protein] + tRNA(Leu) + H(+). The catalysed reaction is N-terminal L-arginyl-[protein] + L-leucyl-tRNA(Leu) = N-terminal L-leucyl-L-arginyl-[protein] + tRNA(Leu) + H(+). It carries out the reaction L-phenylalanyl-tRNA(Phe) + an N-terminal L-alpha-aminoacyl-[protein] = an N-terminal L-phenylalanyl-L-alpha-aminoacyl-[protein] + tRNA(Phe). Functions in the N-end rule pathway of protein degradation where it conjugates Leu, Phe and, less efficiently, Met from aminoacyl-tRNAs to the N-termini of proteins containing an N-terminal arginine or lysine. The protein is Leucyl/phenylalanyl-tRNA--protein transferase of Shewanella baltica (strain OS223).